Consider the following 131-residue polypeptide: Phosphoribosyl-AMP cyclohydrolase (131 aa).

Asp-76 contributes to the Mg(2+) binding site. Cys-77 serves as a coordination point for Zn(2+). Positions 78 and 80 each coordinate Mg(2+). The Zn(2+) site is built by Cys-94 and Cys-101.

It belongs to the PRA-CH family. Homodimer. Mg(2+) is required as a cofactor. Requires Zn(2+) as cofactor.

The protein resides in the cytoplasm. The enzyme catalyses 1-(5-phospho-beta-D-ribosyl)-5'-AMP + H2O = 1-(5-phospho-beta-D-ribosyl)-5-[(5-phospho-beta-D-ribosylamino)methylideneamino]imidazole-4-carboxamide. Its pathway is amino-acid biosynthesis; L-histidine biosynthesis; L-histidine from 5-phospho-alpha-D-ribose 1-diphosphate: step 3/9. Its function is as follows. Catalyzes the hydrolysis of the adenine ring of phosphoribosyl-AMP. The protein is Phosphoribosyl-AMP cyclohydrolase of Stutzerimonas stutzeri (strain A1501) (Pseudomonas stutzeri).